A 114-amino-acid chain; its full sequence is T cell receptor beta variable 4-3 (114 aa).

Positions 1–21 (MGCRLLCCAVLCLLGAVPMET) are cleaved as a signal peptide. Positions 22–114 (GVTQTPRHLV…SALYLCASSQ (93 aa)) constitute an Ig-like domain. A disulfide bridge connects residues C42 and C110. 2 N-linked (GlcNAc...) asparagine glycosylation sites follow: N76 and N89.

As to quaternary structure, alpha-beta TR is a heterodimer composed of an alpha and beta chain; disulfide-linked. The alpha-beta TR is associated with the transmembrane signaling CD3 coreceptor proteins to form the TR-CD3 (TcR or TCR). The assembly of alpha-beta TR heterodimers with CD3 occurs in the endoplasmic reticulum where a single alpha-beta TR heterodimer associates with one CD3D-CD3E heterodimer, one CD3G-CD3E heterodimer and one CD247 homodimer forming a stable octameric structure. CD3D-CD3E and CD3G-CD3E heterodimers preferentially associate with TR alpha and TR beta chains, respectively. The association of the CD247 homodimer is the last step of TcR assembly in the endoplasmic reticulum and is required for transport to the cell surface.

Its subcellular location is the cell membrane. Its function is as follows. V region of the variable domain of T cell receptor (TR) beta chain that participates in the antigen recognition. Alpha-beta T cell receptors are antigen specific receptors which are essential to the immune response and are present on the cell surface of T lymphocytes. Recognize peptide-major histocompatibility (MH) (pMH) complexes that are displayed by antigen presenting cells (APC), a prerequisite for efficient T cell adaptive immunity against pathogens. Binding of alpha-beta TR to pMH complex initiates TR-CD3 clustering on the cell surface and intracellular activation of LCK that phosphorylates the ITAM motifs of CD3G, CD3D, CD3E and CD247 enabling the recruitment of ZAP70. In turn ZAP70 phosphorylates LAT, which recruits numerous signaling molecules to form the LAT signalosome. The LAT signalosome propagates signal branching to three major signaling pathways, the calcium, the mitogen-activated protein kinase (MAPK) kinase and the nuclear factor NF-kappa-B (NF-kB) pathways, leading to the mobilization of transcription factors that are critical for gene expression and essential for T cell growth and differentiation. The T cell repertoire is generated in the thymus, by V-(D)-J rearrangement. This repertoire is then shaped by intrathymic selection events to generate a peripheral T cell pool of self-MH restricted, non-autoaggressive T cells. Post-thymic interaction of alpha-beta TR with the pMH complexes shapes TR structural and functional avidity. In Homo sapiens (Human), this protein is T cell receptor beta variable 4-3.